A 173-amino-acid chain; its full sequence is Translation initiation factor IF-3 (173 aa).

Belongs to the IF-3 family. In terms of assembly, monomer.

It localises to the cytoplasm. Its function is as follows. IF-3 binds to the 30S ribosomal subunit and shifts the equilibrium between 70S ribosomes and their 50S and 30S subunits in favor of the free subunits, thus enhancing the availability of 30S subunits on which protein synthesis initiation begins. The polypeptide is Translation initiation factor IF-3 (Ehrlichia ruminantium (strain Gardel)).